The sequence spans 102 residues: Small ribosomal subunit protein uS10 (102 aa).

It belongs to the universal ribosomal protein uS10 family. As to quaternary structure, part of the 30S ribosomal subunit.

Involved in the binding of tRNA to the ribosomes. The protein is Small ribosomal subunit protein uS10 of Methanosphaera stadtmanae (strain ATCC 43021 / DSM 3091 / JCM 11832 / MCB-3).